The primary structure comprises 116 residues: Small ribosomal subunit protein uS11m (116 aa).

This sequence belongs to the universal ribosomal protein uS11 family.

The protein resides in the mitochondrion. The polypeptide is Small ribosomal subunit protein uS11m (RPS11) (Chondrus crispus (Carrageen Irish moss)).